We begin with the raw amino-acid sequence, 152 residues long: Photosystem II extrinsic protein U, chloroplastic (152 aa).

Residues 1-35 constitute a chloroplast transit peptide; the sequence is MDSTAFVGAAAPLRVAAAARSTICMAAADDKPVVS. The transit peptide at 36–59 directs the protein to the thylakoid; the sequence is RRAALTGAAAAALAAVAGSLPALA.

This sequence belongs to the PsbU family. In terms of assembly, PSII is composed of 1 copy each of membrane proteins PsbA, PsbB, PsbC, PsbD, PsbE, PsbF, PsbH, PsbI, PsbJ, PsbK, PsbL, PsbM, PsbT, PsbX, PsbY, PsbZ, Psb30/Ycf12, at least 3 peripheral proteins of the oxygen-evolving complex and a large number of cofactors. It forms dimeric complexes. The oxygen-evolving complex in red algae is composed of PsbO (OEC33), PsbQ', cytochrome c-550 and PsbU. Predicted to be translocated into the thylakoid lumen by the Tat system.

The protein localises to the plastid. Its subcellular location is the chloroplast thylakoid membrane. In terms of biological role, one of the extrinsic, lumenal subunits of photosystem II (PSII). PSII is a light-driven water plastoquinone oxidoreductase, using light energy to abstract electrons from H(2)O, generating a proton gradient subsequently used for ATP formation. The extrinsic proteins stabilize the structure of photosystem II oxygen-evolving complex (OEC), the ion environment of oxygen evolution and protect the OEC against heat-induced inactivation. In Pyropia yezoensis (Susabi-nori), this protein is Photosystem II extrinsic protein U, chloroplastic.